The primary structure comprises 312 residues: Cobalamin biosynthesis protein CobD (312 aa).

Helical transmembrane passes span 61–81 (IALL…LPLL), 83–103 (IIVP…AQHA), 152–172 (DAVF…AVLY), and 292–312 (GMWL…AIHA).

It belongs to the CobD/CbiB family.

It localises to the cell membrane. It participates in cofactor biosynthesis; adenosylcobalamin biosynthesis. Converts cobyric acid to cobinamide by the addition of aminopropanol on the F carboxylic group. This is Cobalamin biosynthesis protein CobD from Chromobacterium violaceum (strain ATCC 12472 / DSM 30191 / JCM 1249 / CCUG 213 / NBRC 12614 / NCIMB 9131 / NCTC 9757 / MK).